A 294-amino-acid chain; its full sequence is Zinc finger protein CONSTANS-LIKE 3 (294 aa).

Cysteine 8, cysteine 11, cysteine 31, histidine 36, cysteine 51, cysteine 54, cysteine 74, and histidine 79 together coordinate Zn(2+). Residues cysteine 8–leucine 50 form a B box-type 1; atypical zinc finger. The segment at cysteine 51–isoleucine 93 adopts a B box-type 2; atypical zinc-finger fold. A CCT domain is found at arginine 229–arginine 271.

It belongs to the CONSTANS family.

It localises to the nucleus. This is Zinc finger protein CONSTANS-LIKE 3 (COL3) from Arabidopsis thaliana (Mouse-ear cress).